Consider the following 272-residue polypeptide: Sulfate transporter CysZ (272 aa).

4 helical membrane passes run 29-49, 66-86, 148-168, and 219-239; these read FVIMPIVLNTVLLCGLFWLFI, WLSFLSVILLILSILTILLLF, IIALFLLSFIPLVGQTIVPVL, and FVPVINLLIMPVAVCGATLMW.

This sequence belongs to the CysZ family.

The protein localises to the cell inner membrane. High affinity, high specificity proton-dependent sulfate transporter, which mediates sulfate uptake. Provides the sulfur source for the cysteine synthesis pathway. This chain is Sulfate transporter CysZ, found in Haemophilus influenzae (strain ATCC 51907 / DSM 11121 / KW20 / Rd).